Here is a 286-residue protein sequence, read N- to C-terminus: Polyamine aminopropyltransferase (286 aa).

The region spanning 5–238 (PLWHETLHDH…GIMTFAWASD (234 aa)) is the PABS domain. Gln-33 lines the S-methyl-5'-thioadenosine pocket. Spermidine is bound by residues His-64 and Asp-88. S-methyl-5'-thioadenosine-binding positions include Glu-108 and 140 to 141 (DG). The Proton acceptor role is filled by Asp-158. 158–161 (DCTD) serves as a coordination point for spermidine. Pro-165 contributes to the S-methyl-5'-thioadenosine binding site.

Belongs to the spermidine/spermine synthase family. Homodimer or homotetramer.

Its subcellular location is the cytoplasm. It carries out the reaction S-adenosyl 3-(methylsulfanyl)propylamine + putrescine = S-methyl-5'-thioadenosine + spermidine + H(+). Its pathway is amine and polyamine biosynthesis; spermidine biosynthesis; spermidine from putrescine: step 1/1. Functionally, catalyzes the irreversible transfer of a propylamine group from the amino donor S-adenosylmethioninamine (decarboxy-AdoMet) to putrescine (1,4-diaminobutane) to yield spermidine. The polypeptide is Polyamine aminopropyltransferase (Klebsiella pneumoniae subsp. pneumoniae (strain ATCC 700721 / MGH 78578)).